We begin with the raw amino-acid sequence, 277 residues long: Putative phosphoenolpyruvate synthase regulatory protein (277 aa).

157–164 (GVSRSGKT) is a binding site for ADP.

Belongs to the pyruvate, phosphate/water dikinase regulatory protein family. PSRP subfamily.

The enzyme catalyses [pyruvate, water dikinase] + ADP = [pyruvate, water dikinase]-phosphate + AMP + H(+). It carries out the reaction [pyruvate, water dikinase]-phosphate + phosphate + H(+) = [pyruvate, water dikinase] + diphosphate. Functionally, bifunctional serine/threonine kinase and phosphorylase involved in the regulation of the phosphoenolpyruvate synthase (PEPS) by catalyzing its phosphorylation/dephosphorylation. The sequence is that of Putative phosphoenolpyruvate synthase regulatory protein from Aromatoleum aromaticum (strain DSM 19018 / LMG 30748 / EbN1) (Azoarcus sp. (strain EbN1)).